A 333-amino-acid chain; its full sequence is Meiotic drive suppressor wtf9 (333 aa).

Residues 1 to 69 are disordered; it reads MKNNYTSLKS…ENHSSGTTDN (69 aa). Positions 19–30 are enriched in basic and acidic residues; the sequence is KTDHEIDLEKGP. Transmembrane regions (helical) follow at residues 73–95, 108–130, 174–191, and 204–226; these read LLIK…VCYL, VEWT…LTYF, WVVI…TLFL, and LICS…RLPF.

The protein belongs to the WTF family. Homomer. Interacts with other proteins that exhibit high sequence similarity.

It localises to the spore membrane. The protein localises to the vacuole membrane. In terms of biological role, acts as a suppressor component of the dual wtf meiotic drive system, and can suppress but not confer meiotic drive by compatible poisons. Wtf meiotic drive systems promote unequal transmission of alleles from the parental zygote to progeny spores by encoding a poison and an antidote from the same locus; the poison is trans-acting and forms toxic aggregates in all spores within an ascus, wherease the antidote is spore-specific and targets aggregates for degradation by the vacuole. Meiotic drive by wtf systems therefore lead to poisoning of all progeny that do not inherit the dual poison/antidote allele, or express a compatible antidote. The protein is Meiotic drive suppressor wtf9 of Schizosaccharomyces pombe (strain 972 / ATCC 24843) (Fission yeast).